Reading from the N-terminus, the 168-residue chain is Small ribosomal subunit protein uS7c (168 aa).

The protein belongs to the universal ribosomal protein uS7 family. As to quaternary structure, part of the 30S ribosomal subunit.

The protein localises to the plastid. The protein resides in the chloroplast. Functionally, one of the primary rRNA binding proteins, it binds directly to 16S rRNA where it nucleates assembly of the head domain of the 30S subunit. This is Small ribosomal subunit protein uS7c (rps7) from Chlamydomonas reinhardtii (Chlamydomonas smithii).